Consider the following 256-residue polypeptide: Small ribosomal subunit protein eS1 (256 aa).

Positions M1 to K18 are enriched in basic residues. The segment at M1–D22 is disordered. At A2 the chain carries N-acetylalanine; partial.

It belongs to the eukaryotic ribosomal protein eS1 family. As to quaternary structure, component of the small ribosomal subunit (SSU). Mature N.crassa ribosomes consist of a small (40S) and a large (60S) subunit. The 40S small subunit contains 1 molecule of ribosomal RNA (18S rRNA) and at least 32 different proteins. The large 60S subunit contains 3 rRNA molecules (26S, 5.8S and 5S rRNA) and at least 42 different proteins.

It localises to the cytoplasm. Functionally, component of the ribosome, a large ribonucleoprotein complex responsible for the synthesis of proteins in the cell. The small ribosomal subunit (SSU) binds messenger RNAs (mRNAs) and translates the encoded message by selecting cognate aminoacyl-transfer RNA (tRNA) molecules. The large subunit (LSU) contains the ribosomal catalytic site termed the peptidyl transferase center (PTC), which catalyzes the formation of peptide bonds, thereby polymerizing the amino acids delivered by tRNAs into a polypeptide chain. The nascent polypeptides leave the ribosome through a tunnel in the LSU and interact with protein factors that function in enzymatic processing, targeting, and the membrane insertion of nascent chains at the exit of the ribosomal tunnel. This is Small ribosomal subunit protein eS1 (rps1) from Neurospora crassa (strain ATCC 24698 / 74-OR23-1A / CBS 708.71 / DSM 1257 / FGSC 987).